The sequence spans 505 residues: Hexose transporter 1 (505 aa).

At 1–27 (MNILRMDILSRGGTQEIEHRDGFFNTS) the chain is on the cytoplasmic side. Residues 28–48 (FQYVLSACLASFIFGYQVSVL) form a helical membrane-spanning segment. Topologically, residues 49–78 (NTIKSYIVVEFEWCSTKTDTSCEDSILKSS) are extracellular. Cysteines 62 and 70 form a disulfide. The helical transmembrane segment at 79–99 (FLLASVFIGAVLGSGFSGYLV) threads the bilayer. Residues 100 to 104 (KFGRR) lie on the Cytoplasmic side of the membrane. The helical transmembrane segment at 105 to 125 (FSLMVIYIFFIFVSILTAISH) threads the bilayer. Residues 126–134 (HFHTILYAR) lie on the Extracellular side of the membrane. Residues 135–155 (LLSGFGIGLITVSVPMYISEM) form a helical membrane-spanning segment. The Cytoplasmic segment spans residues 156–165 (THKDKKGAYG). The helical transmembrane segment at 166–186 (VLHQLFITFGIFVAVLLGLFL) threads the bilayer. Residue Gln-169 participates in alpha-D-glucose binding. Gln-169 is a binding site for beta-D-glucose. The Extracellular portion of the chain corresponds to 187 to 208 (GDGPKINGKSIELSNFEMFWWR). The chain crosses the membrane as a helical span at residues 209–229 (FMFFLPTIISLLGIILLIAFY). Over 230 to 294 (KEETPYFLYE…SALKIPAYRN (65 aa)) the chain is Cytoplasmic. The helical transmembrane segment at 295-315 (VIILGCILSGFQQFTGINVLV) threads the bilayer. Alpha-D-glucose contacts are provided by Gln-306, Gln-307, and Asn-312. Gln-306 provides a ligand contact to beta-D-glucose. Asn-312 serves as a coordination point for beta-D-glucose. Over 316-332 (ANSNELYKEFLDKNLIT) the chain is Extracellular. The helical transmembrane segment at 333-353 (ILSVIMTAVNFLMTFPAIYII) threads the bilayer. Asn-342 serves as a coordination point for beta-D-glucose. The Cytoplasmic segment spans residues 354–358 (EKIGR). Residues 359 to 379 (KTLLLGGCIGVICAFLPTVIA) form a helical membrane-spanning segment. The Extracellular segment spans residues 380-393 (RQVWGPTKIVNGLS). A helical membrane pass occupies residues 394–414 (IAGTFLMIISFAVSYGPVLWI). Alpha-D-glucose is bound at residue Trp-413. At 415 to 430 (YLHEMYPSEIKDSAAS) the chain is on the cytoplasmic side. Residues 431-451 (LASLINWVCAIIVVFPSDIII) traverse the membrane as a helical segment. The Extracellular portion of the chain corresponds to 452-456 (KKSPS). Residues 457–477 (ILFMFFSVMCIIAFLFIMFFI) traverse the membrane as a helical segment. The Cytoplasmic portion of the chain corresponds to 478-505 (KETKGGEIGTSPYISLEERQKHIGKSKV).

It belongs to the major facilitator superfamily. Sugar transporter (TC 2.A.1.1) family. As to quaternary structure, homodimer.

Its subcellular location is the cell membrane. The enzyme catalyses D-glucose(out) = D-glucose(in). The catalysed reaction is D-fructose(out) = D-fructose(in). It catalyses the reaction D-galactose(in) = D-galactose(out). It carries out the reaction D-mannose(out) = D-mannose(in). The enzyme catalyses D-glucosamine(out) = D-glucosamine(in). The catalysed reaction is D-xylose(out) = D-xylose(in). Its activity is regulated as follows. Inhibited by cytochalasin B. Its function is as follows. Sodium-independent facilitative hexose transporter. Can transport D-glucose and D-fructose. Can transport D-mannose, D-galactose, D-xylose and D-glucosamine. The sequence is that of Hexose transporter 1 from Plasmodium yoelii yoelii.